Consider the following 283-residue polypeptide: MPELPEVETVKRGLKNRLKDFYIHDVEVITPRSISSEGGSKAFVKNIIGLKSGEWTRRGKYLICSLHSSDREEIAGWWVVHLRMTGQFQWFQKKTKSCKHTRVRIWNKDGAEIRFVDTRNFGQMWWISPTFLPTEKITGLKKLGPEPFSKEFNPFYLQESLKKRKRSIKSSLLDQSIVAGAGNIYADESLFQAGILPTKESKKLNKTEIKKICTSLTHILKISIGEGGTSFKDFRDLEGVNGKYGGQAWVYGRENKPCRKCGVKILKAKVAGRGTHWCPNCQK.

Residue Pro-2 is the Schiff-base intermediate with DNA of the active site. Glu-3 (proton donor) is an active-site residue. The active-site Proton donor; for beta-elimination activity is Lys-60. 3 residues coordinate DNA: His-100, Arg-119, and Arg-164. The segment at 249–283 (WVYGRENKPCRKCGVKILKAKVAGRGTHWCPNCQK) adopts an FPG-type zinc-finger fold. Arg-273 functions as the Proton donor; for delta-elimination activity in the catalytic mechanism.

Belongs to the FPG family. In terms of assembly, monomer. The cofactor is Zn(2+).

It carries out the reaction Hydrolysis of DNA containing ring-opened 7-methylguanine residues, releasing 2,6-diamino-4-hydroxy-5-(N-methyl)formamidopyrimidine.. It catalyses the reaction 2'-deoxyribonucleotide-(2'-deoxyribose 5'-phosphate)-2'-deoxyribonucleotide-DNA = a 3'-end 2'-deoxyribonucleotide-(2,3-dehydro-2,3-deoxyribose 5'-phosphate)-DNA + a 5'-end 5'-phospho-2'-deoxyribonucleoside-DNA + H(+). In terms of biological role, involved in base excision repair of DNA damaged by oxidation or by mutagenic agents. Acts as a DNA glycosylase that recognizes and removes damaged bases. Has a preference for oxidized purines, such as 7,8-dihydro-8-oxoguanine (8-oxoG). Has AP (apurinic/apyrimidinic) lyase activity and introduces nicks in the DNA strand. Cleaves the DNA backbone by beta-delta elimination to generate a single-strand break at the site of the removed base with both 3'- and 5'-phosphates. The polypeptide is Formamidopyrimidine-DNA glycosylase (Prochlorococcus marinus (strain SARG / CCMP1375 / SS120)).